The primary structure comprises 533 residues: tRNA(Ile)-lysidine synthase (533 aa).

Residue Ser-21–Ser-26 participates in ATP binding. The 124-residue stretch at Asp-377–Val-500 folds into the CMP/dCMP-type deaminase domain.

It belongs to the tRNA(Ile)-lysidine synthase family.

The protein resides in the cytoplasm. It carries out the reaction cytidine(34) in tRNA(Ile2) + L-lysine + ATP = lysidine(34) in tRNA(Ile2) + AMP + diphosphate + H(+). Ligates lysine onto the cytidine present at position 34 of the AUA codon-specific tRNA(Ile) that contains the anticodon CAU, in an ATP-dependent manner. Cytidine is converted to lysidine, thus changing the amino acid specificity of the tRNA from methionine to isoleucine. The polypeptide is tRNA(Ile)-lysidine synthase (Deinococcus deserti (strain DSM 17065 / CIP 109153 / LMG 22923 / VCD115)).